Reading from the N-terminus, the 210-residue chain is Molybdenum cofactor guanylyltransferase (210 aa).

Residues Leu9–Gly11, Lys21, Asp66, and Asp95 each bind GTP. A Mg(2+)-binding site is contributed by Asp95.

This sequence belongs to the MobA family. In terms of assembly, monomer. Mg(2+) is required as a cofactor.

The protein localises to the cytoplasm. The enzyme catalyses Mo-molybdopterin + GTP + H(+) = Mo-molybdopterin guanine dinucleotide + diphosphate. Its function is as follows. Transfers a GMP moiety from GTP to Mo-molybdopterin (Mo-MPT) cofactor (Moco or molybdenum cofactor) to form Mo-molybdopterin guanine dinucleotide (Mo-MGD) cofactor. The sequence is that of Molybdenum cofactor guanylyltransferase from Syntrophotalea carbinolica (strain DSM 2380 / NBRC 103641 / GraBd1) (Pelobacter carbinolicus).